A 270-amino-acid polypeptide reads, in one-letter code: Putative ABC transporter ATP-binding protein MG304 homolog (270 aa).

Residues 2–232 form the ABC transporter domain; the sequence is LNVTNLSFTY…LHLFHQHHFT (231 aa). Residue 36-43 participates in ATP binding; it reads GHNGSGKS.

This sequence belongs to the ABC transporter superfamily.

The protein is Putative ABC transporter ATP-binding protein MG304 homolog of Mycoplasma pneumoniae (strain ATCC 29342 / M129 / Subtype 1) (Mycoplasmoides pneumoniae).